The following is a 114-amino-acid chain: Histone H3-3 (114 aa).

Basic residues predominate over residues 1–17 (NTGGKAPRKHIAHKQAK). The interval 1-32 (NTGGKAPRKHIAHKQAKKSSAAAATGGVKKPH) is disordered. Residues 18–28 (KSSAAAATGGV) show a composition bias toward low complexity.

The protein belongs to the histone H3 family. In terms of assembly, the nucleosome is a histone octamer containing two molecules each of H2A, H2B, H3 and H4 assembled in one H3-H4 heterotetramer and two H2A-H2B heterodimers. The octamer wraps approximately 147 bp of DNA.

Its subcellular location is the nucleus. The protein resides in the chromosome. Core component of nucleosome. Nucleosomes wrap and compact DNA into chromatin, limiting DNA accessibility to the cellular machineries which require DNA as a template. Histones thereby play a central role in transcription regulation, DNA repair, DNA replication and chromosomal stability. DNA accessibility is regulated via a complex set of post-translational modifications of histones, also called histone code, and nucleosome remodeling. This is Histone H3-3 (H3-3) from Stylonychia lemnae (Ciliate).